A 430-amino-acid polypeptide reads, in one-letter code: MAYDKSIAAFEEAYKVIPGGVDSPVRAFSGVEGTPPFIERGEGAYLFDIDGNRYIDYVQSWGPLIFGHTDADIEASVIDSVKKGLSFGAPTTVETELAEEIVLMFESIDKVRFVSSGTEAVMSAIRLARGATGRDNILKFTGCYHGHSDSLLVQAGSGLATFGTPSSPGVPADLTKHTLLGTYNDIESVEKCFADSPEGIACVIIEPIAGNMGLVPADETFLQQLRALCDAHGTLLIFDEVMSGFRASLKGAQGITTVKPDMVTLGKVIGAGMPVGAFGAGAETMAQLSPEGPVYQAGTLSGNPVAMAAGLTSLRKLKANPAIYVELGNKAKKLVEGLKRAADSVNVPMVTDVRGSMFGFFFSDKPVKNFADAMENDQKLFAKFHKGMLDRGIYLACSSFETGFISTAITDEMIDETVKAAYETLKEIKG.

Residue Lys267 is modified to N6-(pyridoxal phosphate)lysine.

It belongs to the class-III pyridoxal-phosphate-dependent aminotransferase family. HemL subfamily. As to quaternary structure, homodimer. Requires pyridoxal 5'-phosphate as cofactor.

It localises to the cytoplasm. The enzyme catalyses (S)-4-amino-5-oxopentanoate = 5-aminolevulinate. Its pathway is porphyrin-containing compound metabolism; protoporphyrin-IX biosynthesis; 5-aminolevulinate from L-glutamyl-tRNA(Glu): step 2/2. This is Glutamate-1-semialdehyde 2,1-aminomutase from Sulfurovum sp. (strain NBC37-1).